The following is a 70-amino-acid chain: Cold shock-like protein CspG (70 aa).

The CSD domain occupies 7–67 (GLVKWFNEEK…GQKGLQAANV (61 aa)).

The protein resides in the cytoplasm. This chain is Cold shock-like protein CspG (cspG), found in Shewanella violacea (strain JCM 10179 / CIP 106290 / LMG 19151 / DSS12).